A 131-amino-acid chain; its full sequence is Profilin (131 aa).

The protein belongs to the profilin family. As to quaternary structure, occurs in many kinds of cells as a complex with monomeric actin in a 1:1 ratio.

It is found in the cytoplasm. It localises to the cytoskeleton. Binds to actin and affects the structure of the cytoskeleton. At high concentrations, profilin prevents the polymerization of actin, whereas it enhances it at low concentrations. By binding to PIP2, it inhibits the formation of IP3 and DG. The protein is Profilin of Cucumis melo (Muskmelon).